The following is a 116-amino-acid chain: Nitrogenase-stabilizing/protective protein NifW (116 aa).

Belongs to the NifW family. Homotrimer; associates with NifD.

Its function is as follows. May protect the nitrogenase Fe-Mo protein from oxidative damage. This chain is Nitrogenase-stabilizing/protective protein NifW, found in Rhodopseudomonas palustris (strain TIE-1).